Consider the following 193-residue polypeptide: Adenylate kinase (193 aa).

Residue 11–16 (GSGKGT) coordinates ATP. Residues 31–60 (STGDIFRANVKGETPLGLEAKKYMDAGDYV) are NMP. AMP-binding positions include Thr-32, Arg-37, 58–60 (DYV), 86–89 (GYPR), and Gln-93. The segment at 127–137 (GRAKESGRSDD) is LID. Arg-128 lines the ATP pocket. AMP is bound by residues Arg-134 and Arg-145. Gly-173 serves as a coordination point for ATP.

Belongs to the adenylate kinase family. In terms of assembly, monomer.

The protein localises to the cytoplasm. The catalysed reaction is AMP + ATP = 2 ADP. It participates in purine metabolism; AMP biosynthesis via salvage pathway; AMP from ADP: step 1/1. In terms of biological role, catalyzes the reversible transfer of the terminal phosphate group between ATP and AMP. Plays an important role in cellular energy homeostasis and in adenine nucleotide metabolism. The protein is Adenylate kinase of Renibacterium salmoninarum (strain ATCC 33209 / DSM 20767 / JCM 11484 / NBRC 15589 / NCIMB 2235).